We begin with the raw amino-acid sequence, 488 residues long: MNVFFMFSLLFLAALGSCADDRNPLEECFRETDYEEFLEIARXXXXTSNPKHVVRVGAGMSGLSAAYVLAGAGHQVTVLEASERPGGRXXXXXXXXEGWYANLGPMRXXXXXXXXXXXXXKFGLNLNEFSQENDNAWYFIKXXXXXXXXXXDPGLLKYPVKPSEAGKSAGQLYEESLGKXXXXXXXXXXXXXXXXXXXXXXXXXXXXXXXXXXXXXXXXXXXXXXXXXXXXXXXXXXXXXXXXXXXXXFDEIVDGMDKLPTSMYQAIXXXXXXXXXXXXXXXXXXKVTVTYQTPAKXXXXXXXXXXXXXXXXXXXXXXXXXXXXXXXXXXXXXXXXXXXXXXIFLTCTKKFWEDDGIHGGKSTTDLPSRXXXXXXXXXXXXXXVIIAYGIGDDANFFQALDFKDCADIVFNDLSLIHQLPKEEIPSFCYPSMIQKXXXXXXXXXXITTFFTPYQFQHFSEAXXXXXXXIYFAGEYTAQAHGWIDSTIK.

FAD contacts are provided by residues 60-61, 80-81, Arg-88, and 104-107; these read MS, EA, and GPMR. Substrate contacts are provided by Arg-107 and Tyr-388. Residues Cys-347 and Cys-428 are joined by a disulfide bond. FAD is bound by residues Glu-474 and 481 to 486; that span reads GWIDST. 481–482 lines the substrate pocket; sequence GW.

Belongs to the flavin monoamine oxidase family. FIG1 subfamily. In terms of assembly, monomer. This is in contrast with most of its orthologs, that are non-covalently linked homodimers. FAD is required as a cofactor. Post-translationally, N-glycosylated. Expressed by the venom gland.

It localises to the secreted. It carries out the reaction an L-alpha-amino acid + O2 + H2O = a 2-oxocarboxylate + H2O2 + NH4(+). It catalyses the reaction L-leucine + O2 + H2O = 4-methyl-2-oxopentanoate + H2O2 + NH4(+). Catalyzes an oxidative deamination of predominantly hydrophobic and aromatic L-amino acids, thus producing hydrogen peroxide that may contribute to the diverse toxic effects of this enzyme. Shows activity on L-Leu. Exhibits diverse biological activities, such as hemorrhage, hemolysis, edema, antibacterial and antiparasitic activities, as well as regulation of platelet aggregation. When tested on SW480 and SW620 human colon cancer cells, shows inhibition of cell proliferation, and induction of apoptosis, which is probably a consequence of the increased caspase-3 activity and the decreased Bcl-2 expression. This chain is L-amino oxidase, found in Trimeresurus purpureomaculatus (Mangrove pit viper).